A 228-amino-acid chain; its full sequence is ATP synthase subunit beta, mitochondrial (228 aa).

A mitochondrion-targeting transit peptide spans 1 to 31 (MFALRAAAKADKNLLPFLGQLSRSHAAKAAK). 183-190 (GGAGVGKT) is a binding site for ATP.

This sequence belongs to the ATPase alpha/beta chains family. In terms of assembly, F-type ATPases have 2 components, CF(1) - the catalytic core - and CF(0) - the membrane proton channel. CF(1) has five subunits: alpha(3), beta(3), gamma(1), delta(1), epsilon(1). CF(0) has three main subunits: a, b and c.

The protein resides in the mitochondrion. It is found in the mitochondrion inner membrane. The enzyme catalyses ATP + H2O + 4 H(+)(in) = ADP + phosphate + 5 H(+)(out). Its function is as follows. Mitochondrial membrane ATP synthase (F(1)F(0) ATP synthase or Complex V) produces ATP from ADP in the presence of a proton gradient across the membrane which is generated by electron transport complexes of the respiratory chain. F-type ATPases consist of two structural domains, F(1) - containing the extramembraneous catalytic core, and F(0) - containing the membrane proton channel, linked together by a central stalk and a peripheral stalk. During catalysis, ATP synthesis in the catalytic domain of F(1) is coupled via a rotary mechanism of the central stalk subunits to proton translocation. Subunits alpha and beta form the catalytic core in F(1). Rotation of the central stalk against the surrounding alpha(3)beta(3) subunits leads to hydrolysis of ATP in three separate catalytic sites on the beta subunits. The polypeptide is ATP synthase subunit beta, mitochondrial (Drosophila virilis (Fruit fly)).